The primary structure comprises 428 residues: Enolase (428 aa).

Position 163 (glutamine 163) interacts with (2R)-2-phosphoglycerate. The Proton donor role is filled by glutamate 205. Positions 242, 285, and 312 each coordinate Mg(2+). 4 residues coordinate (2R)-2-phosphoglycerate: lysine 337, arginine 366, serine 367, and lysine 388. The Proton acceptor role is filled by lysine 337.

Belongs to the enolase family. Mg(2+) serves as cofactor.

Its subcellular location is the cytoplasm. It localises to the secreted. The protein localises to the cell surface. It carries out the reaction (2R)-2-phosphoglycerate = phosphoenolpyruvate + H2O. It participates in carbohydrate degradation; glycolysis; pyruvate from D-glyceraldehyde 3-phosphate: step 4/5. Its function is as follows. Catalyzes the reversible conversion of 2-phosphoglycerate (2-PG) into phosphoenolpyruvate (PEP). It is essential for the degradation of carbohydrates via glycolysis. The chain is Enolase from Carboxydothermus hydrogenoformans (strain ATCC BAA-161 / DSM 6008 / Z-2901).